The following is a 340-amino-acid chain: GATA transcription factor 20 (340 aa).

Residues 1 to 88 (MSHHDGSKPY…MEEDEDAQHH (88 aa)) are disordered. Residues 25–47 (ADDAAAHVAPTVDHLAAVAAEAE) are compositionally biased toward low complexity. Positions 48–60 (AMARFEEEHRALG) are enriched in basic and acidic residues. The segment covering 61 to 84 (AEEEYEEEEDELEEEEEEMEEDED) has biased composition (acidic residues). In terms of domain architecture, Tify spans 121 to 156 (QPMASNQLTLSFQGEVYVFDSVSPDKVQAVLLLLGG). The CCT domain occupies 182 to 224 (RVASLMRFREKRKERNFDKKIRYSVRKEVALRMQRNRGQFTSS). The interval 215-253 (QRNRGQFTSSKPKGDEATSELTASDGSPNWGSVEGRPPS) is disordered. Polar residues predominate over residues 233–244 (SELTASDGSPNW). Residues 257-284 (CHHCGINAKATPMMRRGPDGPRTLCNAC) form a GATA-type zinc finger. A compositionally biased stretch (polar residues) spans 313–325 (DGNGSAAAPTTEQ). Residues 313 to 340 (DGNGSAAAPTTEQEIPAPATVNGHESST) are disordered.

It belongs to the type IV zinc-finger family. Class C subfamily.

Its subcellular location is the nucleus. Transcriptional activator that specifically binds 5'-GATA-3' or 5'-GAT-3' motifs within gene promoters. The polypeptide is GATA transcription factor 20 (Oryza sativa subsp. japonica (Rice)).